A 197-amino-acid chain; its full sequence is Secreted RxLR effector protein 48 (197 aa).

An N-terminal signal peptide occupies residues 1 to 27 (MCCVSWNWVLACTFLLIFLSWWNCCND). The RxLR-dEER signature appears at 58–79 (RLLRVNLAANAEVLTHEIEEEK).

This sequence belongs to the RxLR effector family.

The protein localises to the secreted. It localises to the host nucleus. Its subcellular location is the host cytoplasm. Its function is as follows. Secreted effector that completely suppresses the host cell death induced by cell death-inducing proteins. This Plasmopara viticola (Downy mildew of grapevine) protein is Secreted RxLR effector protein 48.